The following is a 101-amino-acid chain: NADH-quinone oxidoreductase subunit K (101 aa).

3 helical membrane passes run 4–24 (LAHF…GIFL), 30–50 (IVLL…FVAF), and 61–81 (VFVF…LAIL).

It belongs to the complex I subunit 4L family. As to quaternary structure, NDH-1 is composed of 14 different subunits. Subunits NuoA, H, J, K, L, M, N constitute the membrane sector of the complex.

The protein localises to the cell inner membrane. The catalysed reaction is a quinone + NADH + 5 H(+)(in) = a quinol + NAD(+) + 4 H(+)(out). Its function is as follows. NDH-1 shuttles electrons from NADH, via FMN and iron-sulfur (Fe-S) centers, to quinones in the respiratory chain. The immediate electron acceptor for the enzyme in this species is believed to be ubiquinone. Couples the redox reaction to proton translocation (for every two electrons transferred, four hydrogen ions are translocated across the cytoplasmic membrane), and thus conserves the redox energy in a proton gradient. The sequence is that of NADH-quinone oxidoreductase subunit K from Cupriavidus pinatubonensis (strain JMP 134 / LMG 1197) (Cupriavidus necator (strain JMP 134)).